A 299-amino-acid chain; its full sequence is Protease HtpX homolog (299 aa).

A run of 2 helical transmembrane segments spans residues 19–39 (LFIV…VWYF) and 41–61 (WGLT…WIAY). His-146 provides a ligand contact to Zn(2+). Glu-147 is an active-site residue. Position 150 (His-150) interacts with Zn(2+). A run of 2 helical transmembrane segments spans residues 156 to 176 (ILLM…RDVM) and 198 to 218 (IILL…VLII). Glu-227 contributes to the Zn(2+) binding site.

The protein belongs to the peptidase M48B family. It depends on Zn(2+) as a cofactor.

The protein localises to the cell membrane. The polypeptide is Protease HtpX homolog (Thermoanaerobacter pseudethanolicus (strain ATCC 33223 / 39E) (Clostridium thermohydrosulfuricum)).